Here is a 134-residue protein sequence, read N- to C-terminus: Phosphoribosyl-AMP cyclohydrolase (134 aa).

Asp-80 is a binding site for Mg(2+). Cys-81 lines the Zn(2+) pocket. Residues Asp-82 and Asp-84 each coordinate Mg(2+). Zn(2+)-binding residues include Cys-98 and Cys-105.

This sequence belongs to the PRA-CH family. In terms of assembly, homodimer. The cofactor is Mg(2+). Zn(2+) serves as cofactor.

Its subcellular location is the cytoplasm. It carries out the reaction 1-(5-phospho-beta-D-ribosyl)-5'-AMP + H2O = 1-(5-phospho-beta-D-ribosyl)-5-[(5-phospho-beta-D-ribosylamino)methylideneamino]imidazole-4-carboxamide. Its pathway is amino-acid biosynthesis; L-histidine biosynthesis; L-histidine from 5-phospho-alpha-D-ribose 1-diphosphate: step 3/9. In terms of biological role, catalyzes the hydrolysis of the adenine ring of phosphoribosyl-AMP. The polypeptide is Phosphoribosyl-AMP cyclohydrolase (Herminiimonas arsenicoxydans).